We begin with the raw amino-acid sequence, 272 residues long: Thymidine phosphorylase (272 aa).

The protein belongs to the thymidine/pyrimidine-nucleoside phosphorylase family. As to quaternary structure, homodimer.

The enzyme catalyses thymidine + phosphate = 2-deoxy-alpha-D-ribose 1-phosphate + thymine. Functionally, the enzymes which catalyze the reversible phosphorolysis of pyrimidine nucleosides are involved in the degradation of these compounds and in their utilization as carbon and energy sources, or in the rescue of pyrimidine bases for nucleotide synthesis. In Metamycoplasma hominis (Mycoplasma hominis), this protein is Thymidine phosphorylase (deoA).